Here is a 226-residue protein sequence, read N- to C-terminus: Leucyl/phenylalanyl-tRNA--protein transferase (226 aa).

Belongs to the L/F-transferase family.

Its subcellular location is the cytoplasm. It carries out the reaction N-terminal L-lysyl-[protein] + L-leucyl-tRNA(Leu) = N-terminal L-leucyl-L-lysyl-[protein] + tRNA(Leu) + H(+). The enzyme catalyses N-terminal L-arginyl-[protein] + L-leucyl-tRNA(Leu) = N-terminal L-leucyl-L-arginyl-[protein] + tRNA(Leu) + H(+). The catalysed reaction is L-phenylalanyl-tRNA(Phe) + an N-terminal L-alpha-aminoacyl-[protein] = an N-terminal L-phenylalanyl-L-alpha-aminoacyl-[protein] + tRNA(Phe). Functionally, functions in the N-end rule pathway of protein degradation where it conjugates Leu, Phe and, less efficiently, Met from aminoacyl-tRNAs to the N-termini of proteins containing an N-terminal arginine or lysine. This Pseudomonas entomophila (strain L48) protein is Leucyl/phenylalanyl-tRNA--protein transferase.